The sequence spans 394 residues: Lipase 3 (394 aa).

Positions 1–20 are cleaved as a signal peptide; it reads MTRGALKVTILLVGLGLVLA. Asn-131 carries an N-linked (GlcNAc...) asparagine glycan. Catalysis depends on charge relay system residues Ser-164 and His-369.

This sequence belongs to the AB hydrolase superfamily. Lipase family. As to expression, fat body.

This chain is Lipase 3 (Lip3), found in Drosophila melanogaster (Fruit fly).